The sequence spans 357 residues: Phenylalanine--tRNA ligase alpha subunit (357 aa).

Residue glutamate 257 coordinates Mg(2+).

Belongs to the class-II aminoacyl-tRNA synthetase family. Phe-tRNA synthetase alpha subunit type 1 subfamily. As to quaternary structure, tetramer of two alpha and two beta subunits. Requires Mg(2+) as cofactor.

It localises to the cytoplasm. It catalyses the reaction tRNA(Phe) + L-phenylalanine + ATP = L-phenylalanyl-tRNA(Phe) + AMP + diphosphate + H(+). This is Phenylalanine--tRNA ligase alpha subunit from Ruegeria sp. (strain TM1040) (Silicibacter sp.).